The chain runs to 122 residues: Small ribosomal subunit protein bS6 (122 aa).

The interval 95–122 (AETAPSPMMKEVQREEAKKAAAQSEQAA) is disordered.

This sequence belongs to the bacterial ribosomal protein bS6 family.

Functionally, binds together with bS18 to 16S ribosomal RNA. In Ralstonia nicotianae (strain ATCC BAA-1114 / GMI1000) (Ralstonia solanacearum), this protein is Small ribosomal subunit protein bS6.